A 168-amino-acid polypeptide reads, in one-letter code: MAVLEILTAPDPRLRVQSKQVTDVASVQTLIDDLLDTLYATDNGIGLAAPQVGREEAIVVIDLSDNRDQPLVLINPKVVSGSNKEMGQEGCLSVPDYYADVERYTSVVVEALDREGKPLRIETSDFLAIVMQHEIDHLSGNLFIDYLSPLKQQMAMKKVKKHVKNRAR.

Positions 91 and 133 each coordinate Fe cation. E134 is an active-site residue. H137 serves as a coordination point for Fe cation.

Belongs to the polypeptide deformylase family. It depends on Fe(2+) as a cofactor.

It carries out the reaction N-terminal N-formyl-L-methionyl-[peptide] + H2O = N-terminal L-methionyl-[peptide] + formate. Functionally, removes the formyl group from the N-terminal Met of newly synthesized proteins. Requires at least a dipeptide for an efficient rate of reaction. N-terminal L-methionine is a prerequisite for activity but the enzyme has broad specificity at other positions. The chain is Peptide deformylase 2 from Vibrio cholerae serotype O1 (strain ATCC 39315 / El Tor Inaba N16961).